The chain runs to 364 residues: Uroporphyrinogen decarboxylase (364 aa).

Substrate is bound by residues 28-32 (RQAGR), D78, Y160, T215, and H333.

Belongs to the uroporphyrinogen decarboxylase family. As to quaternary structure, homodimer.

Its subcellular location is the cytoplasm. The catalysed reaction is uroporphyrinogen III + 4 H(+) = coproporphyrinogen III + 4 CO2. Its pathway is porphyrin-containing compound metabolism; protoporphyrin-IX biosynthesis; coproporphyrinogen-III from 5-aminolevulinate: step 4/4. In terms of biological role, catalyzes the decarboxylation of four acetate groups of uroporphyrinogen-III to yield coproporphyrinogen-III. The chain is Uroporphyrinogen decarboxylase from Burkholderia pseudomallei (strain 668).